Here is a 141-residue protein sequence, read N- to C-terminus: MKFLILFALVAVAAAGQVKFTDCGKKEIASVAVDGCEGDLCVIHKSKPVHVIAEFTANQDTCKIEVKVTGQLNGLEVPIPGIETDGCKVLKCPLKKGTKYTMNYSVNVPSVVPNIKTVVKLLATGEHGVLACGAVNTDVKP.

An N-terminal signal peptide occupies residues 1–15; it reads MKFLILFALVAVAAA. 3 disulfide bridges follow: Cys23/Cys132, Cys36/Cys41, and Cys87/Cys92. An N-linked (GlcNAc...) asparagine glycan is attached at Asn103.

It belongs to the NPC2 family.

It is found in the secreted. The polypeptide is Mite group 2 allergen Tyr p 2 (Tyrophagus putrescentiae (Mold mite)).